The chain runs to 232 residues: VIGGDECDINEHPFLAFMYYSPQYFCGMTLINQEWVLTAAHCDKTYMRIYLGIHTRSVANDDEVIRYPKEKFICPNKKKNVITDKDIMLIRLNRPVKNSTHIAPISLPSNPPSVGSVCRIMGWGAITTSEDTYPDVPHCANINLFNNTVCREAYNGLPAKTLCAGVLQGGIDTCGGDSGGPLICNGQFQGILSWGSDPCAEPRKPAFYTKVFDYLPWIQSIIAGNKTATCPP.

A Peptidase S1 domain is found at 1–223; sequence VIGGDECDIN…YLPWIQSIIA (223 aa). 6 disulfides stabilise this stretch: cysteine 7/cysteine 139, cysteine 26/cysteine 42, cysteine 74/cysteine 230, cysteine 118/cysteine 184, cysteine 150/cysteine 163, and cysteine 174/cysteine 199. Catalysis depends on charge relay system residues histidine 41 and aspartate 86. N-linked (GlcNAc...) asparagine glycans are attached at residues asparagine 98 and asparagine 146. Serine 178 functions as the Charge relay system in the catalytic mechanism. The N-linked (GlcNAc...) asparagine glycan is linked to asparagine 225.

The protein belongs to the peptidase S1 family. Snake venom subfamily. In terms of assembly, monomer. Expressed by the venom gland.

The protein localises to the secreted. The enzyme catalyses Selective cleavage of Arg-|-Xaa bond in fibrinogen, to form fibrin, and release fibrinopeptide A. The specificity of further degradation of fibrinogen varies with species origin of the enzyme.. Inhibited by diisopropylfluorophosphate (DFP), but not by hirudin. Thrombin-like snake venom serine protease that clots fibrinogen by releasing fibrinopeptide A from the alpha chain of fibrinogen (FGA), induces platelet aggregation through its interaction with GPIb (GP1BA/GP1BB), and activates factor VIII (F8). The chain is Thrombin-like enzyme bothrombin from Bothrops jararaca (Jararaca).